Reading from the N-terminus, the 322-residue chain is Protein farnesyltransferase/geranylgeranyltransferase type-1 subunit alpha (322 aa).

Residues 1-27 (MSSSEEDDGYVPFSKRPEWSDVKPLAQ) are disordered. PFTA repeat units follow at residues 62-95 (RVLD…EQDE), 103-136 (QEMN…IGSD), 138-171 (KEKE…RDWN), 173-205 (ELAM…NPSP), 213-246 (REVE…KIST), and 287-321 (NSLN…LKLI).

It belongs to the protein prenyltransferase subunit alpha family. In terms of assembly, heterodimer of fntA and fntB (farnesyltransferase). Heterodimer of an alpha and a beta subunit. Mg(2+) is required as a cofactor.

The enzyme catalyses L-cysteinyl-[protein] + (2E,6E)-farnesyl diphosphate = S-(2E,6E)-farnesyl-L-cysteinyl-[protein] + diphosphate. It carries out the reaction geranylgeranyl diphosphate + L-cysteinyl-[protein] = S-geranylgeranyl-L-cysteinyl-[protein] + diphosphate. Catalyzes the transfer of a farnesyl or geranyl-geranyl moiety from farnesyl or geranyl-geranyl diphosphate to a cysteine at the fourth position from the C-terminus of several proteins having the C-terminal sequence Cys-aliphatic-aliphatic-X. The alpha subunit is thought to participate in a stable complex with the substrate. The beta subunit binds the peptide substrate. This is Protein farnesyltransferase/geranylgeranyltransferase type-1 subunit alpha (fntA) from Dictyostelium discoideum (Social amoeba).